The chain runs to 384 residues: Probable endopolygalacturonase C (384 aa).

Residues 1-19 (MVRQLILISSLLAAVAVRA) form the signal peptide. Positions 20–40 (APADPAHPMVTEAPDVNLVEK) are excised as a propeptide. A disulfide bridge links Cys45 with Cys63. PbH1 repeat units follow at residues 176 to 207 (STDLTMTDITVDNTDGDTDDLAANTDGFDIGE) and 208 to 229 (STYITITGAEIYNQDDCVAINS). Asp222 serves as the catalytic Proton donor. Residues Cys224 and Cys240 are joined by a disulfide bond. Residue His244 is part of the active site. PbH1 repeat units follow at residues 254–280 (RDDNTVKNVTFYDVNVLKSQQAIRIKT) and 288–310 (VSEVTYHEIAFSDATDYGIVIEQ). Asn261 is a glycosylation site (N-linked (GlcNAc...) asparagine). 2 disulfides stabilise this stretch: Cys349–Cys354 and Cys373–Cys382.

Belongs to the glycosyl hydrolase 28 family.

The protein resides in the secreted. It catalyses the reaction (1,4-alpha-D-galacturonosyl)n+m + H2O = (1,4-alpha-D-galacturonosyl)n + (1,4-alpha-D-galacturonosyl)m.. Involved in maceration and soft-rotting of plant tissue. Hydrolyzes the 1,4-alpha glycosidic bonds of de-esterified pectate in the smooth region of the plant cell wall. The sequence is that of Probable endopolygalacturonase C (pgaC) from Aspergillus niger (strain ATCC MYA-4892 / CBS 513.88 / FGSC A1513).